Consider the following 505-residue polypeptide: MITLTGHTLTVEEMKRLLLEGEGVTACPTSMQKVAECREVVEKIVEDGKVVYGITTGFGKFSDVLIQKDDVKALQHNLIQSHACGIGDPFPEEVSRGMLILRANTMLKGVSGVRPLVVNMLLEFVNRKIHPVVPQQGSLGASGDLAPLSHLALVLLGEGEVFYKGKRVHAMVALTEEGLEPIELEAKEGLALINGTQAMTAQGVLSYIEAEASAYQSELIASMTMEGLRGIIDAFDENVHKARGYKEQVEVASRIRDILHDSKLVTKQGELRVQDAYSLRCIPQVHGASWQVLNYVKEKLEIEMNAATDNPLIFDGGEKVISGGNFHGQPIAFAMDFLKVGMAELANISERRIERLVNPQLNDLPPFLSPEPGLQSGAMIMQYAAASLVSENKTLAHPASVDSIPSSANQEDHVSMGTIASRHAHQIIQNARRVLAIEMICAMQAAEYRGIENMSTVTKTFYHQGRQQVPSITNDRIFSTDIENIAHWLKTNYSIKERLDVNAAL.

Positions 141-143 form a cross-link, 5-imidazolinone (Ala-Gly); it reads ASG. Ser-142 is modified (2,3-didehydroalanine (Ser)).

The protein belongs to the PAL/histidase family. In terms of processing, contains an active site 4-methylidene-imidazol-5-one (MIO), which is formed autocatalytically by cyclization and dehydration of residues Ala-Ser-Gly.

It is found in the cytoplasm. The catalysed reaction is L-histidine = trans-urocanate + NH4(+). It participates in amino-acid degradation; L-histidine degradation into L-glutamate; N-formimidoyl-L-glutamate from L-histidine: step 1/3. The polypeptide is Histidine ammonia-lyase (Bacillus mycoides (strain KBAB4) (Bacillus weihenstephanensis)).